Consider the following 440-residue polypeptide: Argininosuccinate lyase (440 aa).

The protein belongs to the lyase 1 family. Argininosuccinate lyase subfamily.

The protein localises to the cytoplasm. It catalyses the reaction 2-(N(omega)-L-arginino)succinate = fumarate + L-arginine. It participates in amino-acid biosynthesis; L-arginine biosynthesis; L-arginine from L-ornithine and carbamoyl phosphate: step 3/3. The sequence is that of Argininosuccinate lyase from Clostridium botulinum (strain Langeland / NCTC 10281 / Type F).